Reading from the N-terminus, the 643-residue chain is COP9 signalosome complex subunit 10 (643 aa).

Positions 1–33 (MTDESDNYNDFMMSDEDMDSIEMEDEENDVEGD) are enriched in acidic residues. The disordered stretch occupies residues 1–37 (MTDESDNYNDFMMSDEDMDSIEMEDEENDVEGDEGQR). The 187-residue stretch at 331-517 (CKEEFWECLK…DTVTFYSEQH (187 aa)) folds into the PCI domain. Positions 573–584 (DSQSHSKSNTKS) are enriched in polar residues. The interval 573-594 (DSQSHSKSNTKSMSRHVSGHDP) is disordered.

As to quaternary structure, component of a COP9 signalosome-like (CSN) complex.

Its subcellular location is the cytoplasm. The protein resides in the nucleus. In terms of biological role, component of the COP9 signalosome (CSN) complex that acts as an regulator of the ubiquitin (Ubl) conjugation pathway by mediating the deneddylation of the cullin subunit of SCF-type E3 ubiquitin-protein ligase complexes. The CSN complex is involved in the regulation of the mating pheromone response. The protein is COP9 signalosome complex subunit 10 (RRI2) of Candida glabrata (strain ATCC 2001 / BCRC 20586 / JCM 3761 / NBRC 0622 / NRRL Y-65 / CBS 138) (Yeast).